We begin with the raw amino-acid sequence, 456 residues long: Bifunctional protein GlmU (456 aa).

Residues 1 to 228 (MPQNTLNTVI…SHLAAGVNNK (228 aa)) form a pyrophosphorylase region. Residues 11-14 (LAAG), Lys25, Gln75, 80-81 (GT), 102-104 (YGD), Gly138, Glu153, Asn168, and Asn226 each bind UDP-N-acetyl-alpha-D-glucosamine. A Mg(2+)-binding site is contributed by Asp104. Asn226 is a Mg(2+) binding site. The tract at residues 229–249 (RQLAELERIFQTEQAQELLKA) is linker. The N-acetyltransferase stretch occupies residues 250–456 (GVTLRDPARF…GWMRPEKDKQ (207 aa)). The UDP-N-acetyl-alpha-D-glucosamine site is built by Arg332 and Lys350. His362 acts as the Proton acceptor in catalysis. UDP-N-acetyl-alpha-D-glucosamine-binding residues include Tyr365 and Asn376. Acetyl-CoA is bound by residues Ala379, 385–386 (NY), Ser404, Ala422, and Arg439.

In the N-terminal section; belongs to the N-acetylglucosamine-1-phosphate uridyltransferase family. The protein in the C-terminal section; belongs to the transferase hexapeptide repeat family. Homotrimer. The cofactor is Mg(2+).

The protein resides in the cytoplasm. The enzyme catalyses alpha-D-glucosamine 1-phosphate + acetyl-CoA = N-acetyl-alpha-D-glucosamine 1-phosphate + CoA + H(+). It carries out the reaction N-acetyl-alpha-D-glucosamine 1-phosphate + UTP + H(+) = UDP-N-acetyl-alpha-D-glucosamine + diphosphate. It functions in the pathway nucleotide-sugar biosynthesis; UDP-N-acetyl-alpha-D-glucosamine biosynthesis; N-acetyl-alpha-D-glucosamine 1-phosphate from alpha-D-glucosamine 6-phosphate (route II): step 2/2. The protein operates within nucleotide-sugar biosynthesis; UDP-N-acetyl-alpha-D-glucosamine biosynthesis; UDP-N-acetyl-alpha-D-glucosamine from N-acetyl-alpha-D-glucosamine 1-phosphate: step 1/1. Its pathway is bacterial outer membrane biogenesis; LPS lipid A biosynthesis. Functionally, catalyzes the last two sequential reactions in the de novo biosynthetic pathway for UDP-N-acetylglucosamine (UDP-GlcNAc). The C-terminal domain catalyzes the transfer of acetyl group from acetyl coenzyme A to glucosamine-1-phosphate (GlcN-1-P) to produce N-acetylglucosamine-1-phosphate (GlcNAc-1-P), which is converted into UDP-GlcNAc by the transfer of uridine 5-monophosphate (from uridine 5-triphosphate), a reaction catalyzed by the N-terminal domain. The sequence is that of Bifunctional protein GlmU from Neisseria gonorrhoeae (strain ATCC 700825 / FA 1090).